We begin with the raw amino-acid sequence, 79 residues long: Cyclin-dependent kinases regulatory subunit 2 (79 aa).

An N6-acetyllysine modification is found at Lys-4.

This sequence belongs to the CKS family. In terms of assembly, forms a homohexamer that can probably bind six kinase subunits.

Its function is as follows. Binds to the catalytic subunit of the cyclin dependent kinases and is essential for their biological function. In Bos taurus (Bovine), this protein is Cyclin-dependent kinases regulatory subunit 2 (CKS2).